The primary structure comprises 221 residues: GTP-binding nuclear protein Ran/TC4 (221 aa).

A Small GTPase Ran-type domain is found at Asp-10–Asp-174. Asp-21–Thr-28 contacts GTP. The interval Lys-40 to Val-48 is switch-I. Residues Gly-71, Asn-125–Asp-128, and Ser-153–Lys-155 each bind GTP. The switch-II stretch occupies residues Gly-71–Gln-87.

This sequence belongs to the small GTPase superfamily. Ran family. Found in a nuclear export complex with RanGTP, exportin and pre-miRNA.

It localises to the nucleus. Functionally, GTP-binding protein involved in nucleocytoplasmic transport. Required for the import of protein into the nucleus and also for RNA export. Involved in chromatin condensation and control of cell cycle. This Vicia faba (Broad bean) protein is GTP-binding nuclear protein Ran/TC4.